The sequence spans 223 residues: Uracil phosphoribosyltransferase (223 aa).

Residues Arg-86, Arg-111, and 145–153 (DPILATGST) contribute to the 5-phospho-alpha-D-ribose 1-diphosphate site. Uracil contacts are provided by residues Ile-209 and 214 to 216 (GDA). Asp-215 contributes to the 5-phospho-alpha-D-ribose 1-diphosphate binding site.

The protein belongs to the UPRTase family. Mg(2+) serves as cofactor.

It carries out the reaction UMP + diphosphate = 5-phospho-alpha-D-ribose 1-diphosphate + uracil. The protein operates within pyrimidine metabolism; UMP biosynthesis via salvage pathway; UMP from uracil: step 1/1. Its activity is regulated as follows. Allosterically activated by GTP. Catalyzes the conversion of uracil and 5-phospho-alpha-D-ribose 1-diphosphate (PRPP) to UMP and diphosphate. This chain is Uracil phosphoribosyltransferase, found in Natronomonas pharaonis (strain ATCC 35678 / DSM 2160 / CIP 103997 / JCM 8858 / NBRC 14720 / NCIMB 2260 / Gabara) (Halobacterium pharaonis).